The sequence spans 157 residues: 2-C-methyl-D-erythritol 2,4-cyclodiphosphate synthase (157 aa).

A divalent metal cation-binding residues include aspartate 8 and histidine 10. Residues 8 to 10 and 34 to 35 each bind 4-CDP-2-C-methyl-D-erythritol 2-phosphate; these read DVH and HS. A divalent metal cation is bound at residue histidine 42. Residues 56–58, 61–65, 100–106, 132–135, and phenylalanine 139 contribute to the 4-CDP-2-C-methyl-D-erythritol 2-phosphate site; these read DIG, FPDTD, AQKPKMA, and TTEE.

Belongs to the IspF family. As to quaternary structure, homotrimer. A divalent metal cation is required as a cofactor.

The enzyme catalyses 4-CDP-2-C-methyl-D-erythritol 2-phosphate = 2-C-methyl-D-erythritol 2,4-cyclic diphosphate + CMP. It functions in the pathway isoprenoid biosynthesis; isopentenyl diphosphate biosynthesis via DXP pathway; isopentenyl diphosphate from 1-deoxy-D-xylulose 5-phosphate: step 4/6. Involved in the biosynthesis of isopentenyl diphosphate (IPP) and dimethylallyl diphosphate (DMAPP), two major building blocks of isoprenoid compounds. Catalyzes the conversion of 4-diphosphocytidyl-2-C-methyl-D-erythritol 2-phosphate (CDP-ME2P) to 2-C-methyl-D-erythritol 2,4-cyclodiphosphate (ME-CPP) with a corresponding release of cytidine 5-monophosphate (CMP). The polypeptide is 2-C-methyl-D-erythritol 2,4-cyclodiphosphate synthase (Clostridium novyi (strain NT)).